The sequence spans 350 residues: tRNA dimethylallyltransferase (350 aa).

An ATP-binding site is contributed by 34-41 (GPTASGKT). 36–41 (TASGKT) serves as a coordination point for substrate. Interaction with substrate tRNA regions lie at residues 63 to 66 (DSAL), 187 to 191 (QRIQR), and 274 to 279 (RCVGYR).

It belongs to the IPP transferase family. Monomer. Mg(2+) is required as a cofactor.

The catalysed reaction is adenosine(37) in tRNA + dimethylallyl diphosphate = N(6)-dimethylallyladenosine(37) in tRNA + diphosphate. Its function is as follows. Catalyzes the transfer of a dimethylallyl group onto the adenine at position 37 in tRNAs that read codons beginning with uridine, leading to the formation of N6-(dimethylallyl)adenosine (i(6)A). This is tRNA dimethylallyltransferase from Paracidovorax citrulli (strain AAC00-1) (Acidovorax citrulli).